The chain runs to 446 residues: MSGQNNVVGVHYKVGRRIGEGSFGVIFEGTNLLNNQQVAIKFEPRRSDAPQLRDEYRTYKLLAGCTGIPNVYYFGQEGLHNILVIDLLGPSLEDLLDLCGRKFSVKTVAMAAKQMLARVQSIHEKSLVYRDIKPDNFLIGRPNSKNANMIYVVDFGMVKFYRDPVTKQHIPYREKKNLSGTARYMSINTHLGREQSRRDDLEALGHVFMYFLRGSLPWQGLKAATNKQKYERIGEKKQSTPLRELCAGFPEEFYKYMHYARNLAFDATPDYDYLQGLFSKVLERLNTTEDENFDWNLLNNGKGWQSLKSRNAETENQRSSKPPAPKLESKSPALQNHASTQNVVSKRSDYEKPFAEPHLNSASDSAEPNQNSLPNPPTETKATTTVPDRSGLATNQPAPVDVHDSSEERVTREQVQNATKETEAPKKKKSFWASILSCCSGSNEDT.

The 263-residue stretch at 12–274 folds into the Protein kinase domain; that stretch reads YKVGRRIGEG…FDATPDYDYL (263 aa). ATP-binding positions include 18–26 and lysine 41; that span reads IGEGSFGVI. Aspartate 131 acts as the Proton acceptor in catalysis. The interval 308–430 is disordered; the sequence is KSRNAETENQ…ETEAPKKKKS (123 aa). At serine 329 the chain carries Phosphoserine. Residues 332 to 345 show a composition bias toward polar residues; sequence PALQNHASTQNVVS. Basic and acidic residues predominate over residues 346-355; it reads KRSDYEKPFA. The segment covering 360–397 has biased composition (polar residues); it reads NSASDSAEPNQNSLPNPPTETKATTTVPDRSGLATNQP. Residues 401–412 show a composition bias toward basic and acidic residues; that stretch reads DVHDSSEERVTR.

It belongs to the protein kinase superfamily. CK1 Ser/Thr protein kinase family. Casein kinase I subfamily.

Its subcellular location is the cytoplasm. The catalysed reaction is L-seryl-[protein] + ATP = O-phospho-L-seryl-[protein] + ADP + H(+). The enzyme catalyses L-threonyl-[protein] + ATP = O-phospho-L-threonyl-[protein] + ADP + H(+). In terms of biological role, casein kinases are operationally defined by their preferential utilization of acidic proteins such as caseins as substrates. The sequence is that of Casein kinase I homolog 1 (cki1) from Schizosaccharomyces pombe (strain 972 / ATCC 24843) (Fission yeast).